The primary structure comprises 120 residues: UPF0102 protein FRAAL5785 (120 aa).

It belongs to the UPF0102 family.

This Frankia alni (strain DSM 45986 / CECT 9034 / ACN14a) protein is UPF0102 protein FRAAL5785.